The sequence spans 715 residues: Fatty acid oxidation complex subunit alpha (715 aa).

The segment at 1–190 (MIYQGKAITV…KVGAVDAVVA (190 aa)) is enoyl-CoA hydratase/isomerase. A substrate-binding site is contributed by D297. Residues 312 to 715 (KDVKLAAVLG…MAKNGQKFFG (404 aa)) form a 3-hydroxyacyl-CoA dehydrogenase region. NAD(+)-binding positions include M325, D344, 401 to 403 (VVE), K408, and S430. Residue H451 is the For 3-hydroxyacyl-CoA dehydrogenase activity of the active site. N454 is a binding site for NAD(+). Substrate-binding residues include N501 and Y660.

The protein in the N-terminal section; belongs to the enoyl-CoA hydratase/isomerase family. This sequence in the C-terminal section; belongs to the 3-hydroxyacyl-CoA dehydrogenase family. Heterotetramer of two alpha chains (FadB) and two beta chains (FadA).

The catalysed reaction is a (3S)-3-hydroxyacyl-CoA + NAD(+) = a 3-oxoacyl-CoA + NADH + H(+). The enzyme catalyses a (3S)-3-hydroxyacyl-CoA = a (2E)-enoyl-CoA + H2O. It carries out the reaction a 4-saturated-(3S)-3-hydroxyacyl-CoA = a (3E)-enoyl-CoA + H2O. It catalyses the reaction (3S)-3-hydroxybutanoyl-CoA = (3R)-3-hydroxybutanoyl-CoA. The catalysed reaction is a (3Z)-enoyl-CoA = a 4-saturated (2E)-enoyl-CoA. The enzyme catalyses a (3E)-enoyl-CoA = a 4-saturated (2E)-enoyl-CoA. Its pathway is lipid metabolism; fatty acid beta-oxidation. Functionally, involved in the aerobic and anaerobic degradation of long-chain fatty acids via beta-oxidation cycle. Catalyzes the formation of 3-oxoacyl-CoA from enoyl-CoA via L-3-hydroxyacyl-CoA. It can also use D-3-hydroxyacyl-CoA and cis-3-enoyl-CoA as substrate. The chain is Fatty acid oxidation complex subunit alpha from Pseudomonas aeruginosa (strain LESB58).